The primary structure comprises 1121 residues: Cuscuta receptor 1 (1121 aa).

The signal sequence occupies residues 1 to 20 (MGNIKFLLLVFFLIVVVVNG). Topologically, residues 21–1058 (CWEEERNALL…EESSELEDIQ (1038 aa)) are extracellular. Residue N91 is glycosylated (N-linked (GlcNAc...) asparagine). LRR repeat units follow at residues 98–122 (FKSL…GFSK), 126–152 (LPNL…CWIS), 185–209 (LSNL…ALGE), 210–233 (LRNL…SLKI), 234–259 (FPSL…IIDL), 260–282 (SNLE…KGNK), 284–308 (MTSL…SLKS), and 309–331 (FSSL…IYAL). N224 is a glycosylation site (N-linked (GlcNAc...) asparagine). N-linked (GlcNAc...) asparagine glycans are attached at residues N298, N321, and N333. Residues 334 to 360 (LSTVEYLYFKGSSLNDNFLPNIGQMTS) form an LRR 9 repeat. Residues N372 and N406 are each glycosylated (N-linked (GlcNAc...) asparagine). 21 LRR repeats span residues 383 to 406 (LKYI…CLGN), 407 to 432 (LTSL…IWRR), 433 to 457 (LTSL…QFSD), 459 to 479 (KKLI…EYQN), 507 to 531 (QYDL…LLEN), 556 to 580 (HLHL…MSLA), 581 to 605 (FPKL…ISGI), 607 to 628 (LTIL…LAVV), 630 to 654 (SPQL…EFRP), 655 to 678 (HVLS…VFLS), 680 to 701 (LITL…TRDN), 702 to 725 (RRLL…ICNL), 726 to 749 (KIIN…VSSL), 751 to 772 (LKHI…IFNF), 773 to 796 (SSLI…IGSL), 797 to 820 (SNLN…ICML), 822 to 846 (NLSI…YLTQ), 914 to 938 (LKYM…LGNM), 939 to 961 (SNIH…TFSN), 962 to 986 (LQEI…LLEL), and 988 to 1012 (SLAV…QFGT). N-linked (GlcNAc...) asparagine glycans are attached at residues N531, N576, and N588. N689 carries an N-linked (GlcNAc...) asparagine glycan. Residue N771 is glycosylated (N-linked (GlcNAc...) asparagine). N-linked (GlcNAc...) asparagine glycans are attached at residues N822, N937, N945, N976, N998, N1014, and N1041. Residues 1059-1079 (CFYIGFVVSFGAILLGLAAAL) form a helical membrane-spanning segment. At 1080-1121 (CLNRHWRRAWFRMIEALMFYCYYFVLDNIVTPIKSRWYKNVG) the chain is on the cytoplasmic side.

This sequence belongs to the RLP family. As to quaternary structure, interacts with an 11 kDa glycine-rich protein (GRP) of C.reflexa. Interacts with SOBIR1 and SOBIR1-like kinases; presence or absence of GRP has no effect on interaction.

It localises to the cell membrane. It is found in the cell surface. Its function is as follows. Involved in plant defense. Contributes to resistance against parasitic plant C.reflexa. Acts as a receptor for the 11 kDa glycine-rich protein (GRP) of C.reflexa inducing immune responses such as emission of stress-related phytohormone ethylene, reactive oxygen species (ROS) release, and hypersensitive cell death. Recognizes a specific pathogen-associated molecular pattern (PAMP), a cysteine-rich peptide 21 (crip21), from GRP located on the cell wall of C.reflexa. The protein is Cuscuta receptor 1 of Solanum lycopersicum (Tomato).